The sequence spans 308 residues: Glutamyl-Q tRNA(Asp) synthetase (308 aa).

Residues 19-23 (RFAPS) and Glu55 each bind L-glutamate. The 'HIGH' region signature appears at 22 to 32 (PSPSGELHFGS). Zn(2+) is bound by residues Cys111, Cys113, Tyr125, and Cys129. L-glutamate contacts are provided by Tyr182 and Arg200. Residues 238–242 (KLSKQ) carry the 'KMSKS' region motif. Residue Lys241 coordinates ATP.

Belongs to the class-I aminoacyl-tRNA synthetase family. GluQ subfamily. Zn(2+) is required as a cofactor.

In terms of biological role, catalyzes the tRNA-independent activation of glutamate in presence of ATP and the subsequent transfer of glutamate onto a tRNA(Asp). Glutamate is transferred on the 2-amino-5-(4,5-dihydroxy-2-cyclopenten-1-yl) moiety of the queuosine in the wobble position of the QUC anticodon. This chain is Glutamyl-Q tRNA(Asp) synthetase, found in Escherichia coli (strain K12 / MC4100 / BW2952).